A 269-amino-acid chain; its full sequence is Expansin-B9 (269 aa).

A signal peptide spans 1-24; it reads MGSLTTNIVLAVAVVAALVGGGSC. N34 is a glycosylation site (N-linked (GlcNAc...) asparagine). The region spanning 63–169 is the Expansin-like EG45 domain; it reads GGACGIKNVN…RRVRCKYPGG (107 aa). 3 disulfide bridges follow: C66-C94, C97-C164, and C102-C108. The region spanning 183–264 is the Expansin-like CBD domain; sequence NYLAVLVKFV…NWMPDAIYVS (82 aa).

Belongs to the expansin family. Expansin B subfamily.

The protein localises to the secreted. Its subcellular location is the cell wall. It is found in the membrane. Functionally, may cause loosening and extension of plant cell walls by disrupting non-covalent bonding between cellulose microfibrils and matrix glucans. No enzymatic activity has been found. May be required for rapid internodal elongation in deepwater rice during submergence. This is Expansin-B9 (EXPB9) from Oryza sativa subsp. japonica (Rice).